The chain runs to 39 residues: Photosystem II reaction center protein J (39 aa).

Residues 7-27 (IPLWLVATIAGLGVIAVLGLF) traverse the membrane as a helical segment.

This sequence belongs to the PsbJ family. As to quaternary structure, PSII is composed of 1 copy each of membrane proteins PsbA, PsbB, PsbC, PsbD, PsbE, PsbF, PsbH, PsbI, PsbJ, PsbK, PsbL, PsbM, PsbT, PsbX, PsbY, PsbZ, Psb30/Ycf12, peripheral proteins PsbO, CyanoQ (PsbQ), PsbU, PsbV and a large number of cofactors. It forms dimeric complexes.

It localises to the cellular thylakoid membrane. Functionally, one of the components of the core complex of photosystem II (PSII). PSII is a light-driven water:plastoquinone oxidoreductase that uses light energy to abstract electrons from H(2)O, generating O(2) and a proton gradient subsequently used for ATP formation. It consists of a core antenna complex that captures photons, and an electron transfer chain that converts photonic excitation into a charge separation. The polypeptide is Photosystem II reaction center protein J (Microcystis aeruginosa (strain NIES-843 / IAM M-2473)).